The sequence spans 469 residues: 3-isopropylmalate dehydratase large subunit (469 aa).

Cys-350, Cys-410, and Cys-413 together coordinate [4Fe-4S] cluster.

The protein belongs to the aconitase/IPM isomerase family. LeuC type 1 subfamily. As to quaternary structure, heterodimer of LeuC and LeuD. The cofactor is [4Fe-4S] cluster.

It carries out the reaction (2R,3S)-3-isopropylmalate = (2S)-2-isopropylmalate. Its pathway is amino-acid biosynthesis; L-leucine biosynthesis; L-leucine from 3-methyl-2-oxobutanoate: step 2/4. In terms of biological role, catalyzes the isomerization between 2-isopropylmalate and 3-isopropylmalate, via the formation of 2-isopropylmaleate. In Sinorhizobium fredii (strain NBRC 101917 / NGR234), this protein is 3-isopropylmalate dehydratase large subunit.